The primary structure comprises 412 residues: Heat stress transcription factor A-3 (412 aa).

Residues 53–147 mediate DNA binding; sequence IPPFLSKTFD…LLKNIHRRRS (95 aa). The interval 144–170 is disordered; that stretch reads RRRSPQSNQTCCSSTSQSQGSPTEVGG. The segment covering 148-166 has biased composition (low complexity); the sequence is PQSNQTCCSSTSQSQGSPT. Residues 159-225 are hydrophobic repeat HR-A/B; sequence SQSQGSPTEV…QLLSFLAKLF (67 aa). Residues 166-224 adopt a coiled-coil conformation; that stretch reads TEVGGEIEKLRKERRALMEEMVELQQQSRGTARHVDTVNQRLKAAEQRQKQLLSFLAKL. A Bipartite nuclear localization signal motif is present at residues 238–254; it reads KGKEKGGALGLEKARKK. Positions 277–286 match the AHA1 motif; the sequence is DDWERLLMYD. The AHA2 motif lies at 381-390; it reads DVCWEQFAAG.

This sequence belongs to the HSF family. Class A subfamily. In terms of assembly, homotrimer. Exhibits temperature-dependent phosphorylation.

The protein resides in the nucleus. Its function is as follows. Transcriptional activator that specifically binds DNA sequence 5'-AGAAnnTTCT-3' known as heat shock promoter elements (HSE). Involved in heat stress response. Activated by DREB2A under heat stress. The chain is Heat stress transcription factor A-3 (HSFA3) from Arabidopsis thaliana (Mouse-ear cress).